The chain runs to 122 residues: Large ribosomal subunit protein bL12 (122 aa).

Belongs to the bacterial ribosomal protein bL12 family. As to quaternary structure, homodimer. Part of the ribosomal stalk of the 50S ribosomal subunit. Forms a multimeric L10(L12)X complex, where L10 forms an elongated spine to which 2 to 4 L12 dimers bind in a sequential fashion. Binds GTP-bound translation factors.

In terms of biological role, forms part of the ribosomal stalk which helps the ribosome interact with GTP-bound translation factors. Is thus essential for accurate translation. The sequence is that of Large ribosomal subunit protein bL12 from Staphylococcus aureus (strain Newman).